An 825-amino-acid chain; its full sequence is Lon protease (825 aa).

The 197-residue stretch at 41-237 folds into the Lon N-terminal domain; that stretch reads LPIIFIPNTI…KVIQLLLEQK (197 aa). 388-395 provides a ligand contact to ATP; that stretch reads GPPGTGKT. One can recognise a Lon proteolytic domain in the interval 625-805; the sequence is SNPPGVVTGL…DEVLYEALGL (181 aa). Residues Ser711 and Lys754 contribute to the active site.

This sequence belongs to the peptidase S16 family. As to quaternary structure, homohexamer. Organized in a ring with a central cavity.

Its subcellular location is the cytoplasm. The enzyme catalyses Hydrolysis of proteins in presence of ATP.. Its function is as follows. ATP-dependent serine protease that mediates the selective degradation of mutant and abnormal proteins as well as certain short-lived regulatory proteins. Required for cellular homeostasis and for survival from DNA damage and developmental changes induced by stress. Degrades polypeptides processively to yield small peptide fragments that are 5 to 10 amino acids long. Binds to DNA in a double-stranded, site-specific manner. The protein is Lon protease of Methanosphaera stadtmanae (strain ATCC 43021 / DSM 3091 / JCM 11832 / MCB-3).